The chain runs to 3416 residues: Genome polyprotein (3416 aa).

Positions 1–34 (MAKGAVLKGKGGGPPRRVPKETAKKTRQGPGRLP) are disordered. The Cytoplasmic segment spans residues 1–99 (MAKGAVLKGK…NKRRGKRRST (99 aa)). Positions 97–117 (RSTTGLLTPILLACLATLVFS) are cleaved as a propeptide — ER anchor for the capsid protein C, removed in mature form by serine protease NS3. The chain crosses the membrane as a helical span at residues 100 to 120 (TGLLTPILLACLATLVFSATV). Topologically, residues 121–243 (RRERTGNMVI…HLTRVEGWVW (123 aa)) are extracellular. Residue Asn-145 is glycosylated (N-linked (GlcNAc...) asparagine; by host). A helical membrane pass occupies residues 244–261 (KNKFLTAAFCAVVWMVTD). A topological domain (cytoplasmic) is located at residue Ser-262. Residues 263–281 (LPTRFIVITVALCLAPTYA) form a helical membrane-spanning segment. Topologically, residues 282 to 728 (TRCTHLQNRD…HTAFGAAFNT (447 aa)) are extracellular. Cystine bridges form between Cys-284–Cys-311, Cys-341–Cys-397, Cys-341–Cys-402, Cys-355–Cys-386, Cys-373–Cys-397, and Cys-373–Cys-402. Residues 379-392 (DRGWGNHCGLFGKG) are fusion peptide. N-linked (GlcNAc...) asparagine; by host glycosylation is present at Asn-435. 2 disulfide bridges follow: Cys-467/Cys-571 and Cys-588/Cys-619. A helical transmembrane segment spans residues 729–749 (IFGGVGFLPRILLGVALAWLG). The Cytoplasmic portion of the chain corresponds to 750-756 (LNSRNPT). Residues 757 to 777 (LSVGFLITGGLVLTMTLGVGA) traverse the membrane as a helical segment. Residues 778 to 1134 (DMGCAIDANR…RSMVLADNGA (357 aa)) are Extracellular-facing. 6 disulfides stabilise this stretch: Cys-781–Cys-792, Cys-832–Cys-922, Cys-957–Cys-1002, Cys-1059–Cys-1108, Cys-1070–Cys-1092, and Cys-1091–Cys-1095. Residues Asn-862, Asn-985, and Asn-1001 are each glycosylated (N-linked (GlcNAc...) asparagine; by host). The chain crosses the membrane as a helical span at residues 1135-1155 (MLSEGGVPGIVAVFVVLELVI). Residues 1156 to 1164 (RRRPTTGSS) are Lumenal-facing. Residues 1165 to 1185 (VVWCGMVVLGLVVTGLVTIEG) form a helical membrane-spanning segment. Residues 1186 to 1189 (LCRY) are Cytoplasmic-facing. A helical transmembrane segment spans residues 1190–1210 (VVAVGILMSMELGPEIVALVL). The Lumenal segment spans residues 1211-1235 (LQAVFDMRTGLLVAFAVKRAYTTRE). The helical transmembrane segment at 1236 to 1256 (AVATYFLLLVLELGFPEASLS) threads the bilayer. Topologically, residues 1257–1295 (NIWKWADSLAMGALILQACGQEGRTRVGYLLAAMMTQKD) are cytoplasmic. A helical membrane pass occupies residues 1296–1316 (MVIIHTGLTIFLSAATAMAVW). The Lumenal portion of the chain corresponds to 1317 to 1361 (SMIKGQRDQKGLSWATPLAGLLGGEGVGLRLLAFRKLAERRNRRS). The chain crosses the membrane as a helical span at residues 1362 to 1379 (FSEPLTVVGVMLTVASGM). At 1380–1384 (VRHTS) the chain is on the cytoplasmic side. The helical transmembrane segment at 1385–1405 (QEALCALVAGAFLLLMMVLGT) threads the bilayer. Residues 1406–1456 (RKMQLTAEWCGEVEWNPDLVNEGGEVNLKVRQDAMGNLHLTEVEKEERAMA) are Lumenal-facing. The interacts with and activates NS3 protease stretch occupies residues 1412 to 1451 (AEWCGEVEWNPDLVNEGGEVNLKVRQDAMGNLHLTEVEKE). An intramembrane region (helical) is located at residues 1457-1477 (LWLLAGLVASAFHWAGILIVL). At 1478–2162 (AVWTLFEMLG…RMAERDAPEA (685 aa)) the chain is on the lumenal side. The Peptidase S7 domain maps to 1492 to 1671 (SELVFSGQET…EAEKSRPEIP (180 aa)). Catalysis depends on charge relay system; for serine protease NS3 activity residues His-1545, Asp-1569, and Ser-1629. In terms of domain architecture, Helicase ATP-binding spans 1677 to 1833 (TGWMSKGQIT…ESNGAIMSEE (157 aa)). 1690–1697 (MHPGSGKT) provides a ligand contact to ATP. Positions 1781–1784 (DEAH) match the DEAH box motif. The 159-residue stretch at 1844–2002 (GFDWITEYEG…TLRGPVATFY (159 aa)) folds into the Helicase C-terminal domain. Lys-1885 is modified (N6-acetyllysine; by host). The helical transmembrane segment at 2163-2183 (FLTIVEVAVLGVATLGILWCF) threads the bilayer. Residues 2184 to 2191 (VARASVSR) lie on the Cytoplasmic side of the membrane. The segment at residues 2192–2211 (MFLGTVVLFAALFLLWIGGV) is an intramembrane region (helical). A topological domain (lumenal) is located at residue Asp-2212. Residues 2213 to 2233 (YGHMAGIALIFYTLLTVLQPE) form a helical membrane-spanning segment. At 2234–2246 (PGKQRSSDDNRLA) the chain is on the cytoplasmic side. Residues 2247–2267 (YFLLGLFSLAGLVTANEMGML) traverse the membrane as a helical segment. Over 2268–2301 (DKTKADLAGLVWRGEQRHPAWEEWTNVDIQPARS) the chain is Lumenal. The segment at residues 2302-2322 (WGTYVLIVSLFTPYMLHQLQT) is an intramembrane region (helical). Residues 2323–2345 (KIQQLVNSSVASGAQAMRDLGGG) are Lumenal-facing. The segment at residues 2346-2366 (TPFFGVAGHVIALGVTSLVGA) is an intramembrane region (helical). The Lumenal portion of the chain corresponds to 2367–2368 (TP). Residues 2369–2389 (MSLGLGVALAAFHLAIVASGL) form a helical membrane-spanning segment. Residues 2390–2432 (EAELTQRAHRVFFSAMVKNPMVDGDVINPFPDGETKPALYERR) lie on the Cytoplasmic side of the membrane. The chain crosses the membrane as a helical span at residues 2433 to 2453 (MSLILAIALCMGSVVLNRTAA). Over 2454–2476 (SMTEAGAVGLAALGQLVHPETET) the chain is Lumenal. A helical membrane pass occupies residues 2477–2497 (LWTMPMACGMAGLVRGSFWGL). Topologically, residues 2498–3416 (LPMGHRLWLR…WDLKLESNII (919 aa)) are cytoplasmic. Positions 2514–2778 (GGAEGETLGD…EVDLGTGTRC (265 aa)) constitute an mRNA cap 0-1 NS5-type MT domain. Ser-2569 contributes to the S-adenosyl-L-methionine binding site. The residue at position 2569 (Ser-2569) is a Phosphoserine. Lys-2574 (for 2'-O-MTase activity) is an active-site residue. S-adenosyl-L-methionine-binding residues include Gly-2599, Trp-2600, Thr-2617, Ile-2618, Asp-2644, and Val-2645. Asp-2659 (for 2'-O-MTase activity) is an active-site residue. Ile-2660 contacts S-adenosyl-L-methionine. Active-site for 2'-O-MTase activity residues include Lys-2696 and Glu-2732. The interval 2732-2736 (EMYFS) is interaction with host SCRIB. Tyr-2734 is a binding site for S-adenosyl-L-methionine. Residues Glu-2952, His-2956, Cys-2961, and Cys-2964 each coordinate Zn(2+). The RdRp catalytic domain maps to 3042 to 3191 (GLFYADDTAG…RPIDDRFGKA (150 aa)). Positions 3226, 3242, and 3361 each coordinate Zn(2+).

In the N-terminal section; belongs to the class I-like SAM-binding methyltransferase superfamily. mRNA cap 0-1 NS5-type methyltransferase family. In terms of assembly, homodimer. Interacts (via N-terminus) with host EXOC1 (via C-terminus); this interaction results in EXOC1 degradation through the proteasome degradation pathway. Forms heterodimers with envelope protein E in the endoplasmic reticulum and Golgi. As to quaternary structure, homodimer; in the endoplasmic reticulum and Golgi. Interacts with protein prM. Interacts with non-structural protein 1. In terms of assembly, homodimer; Homohexamer when secreted. Interacts with envelope protein E. NS1 interacts with NS4B. Interacts with host complement protein CFH; this interaction leads to the degradation of C3. Interacts (via N-terminus) with serine protease NS3. As to quaternary structure, forms a heterodimer with serine protease NS3. May form homooligomers. In terms of assembly, forms a heterodimer with NS2B. Interacts with non-structural protein 2A (via N-terminus). Interacts with NS4B. Interacts with unphosphorylated RNA-directed RNA polymerase NS5; this interaction stimulates RNA-directed RNA polymerase NS5 guanylyltransferase activity. Interacts with serine protease NS3. As to quaternary structure, homodimer. Interacts with host STAT2; this interaction inhibits the phosphorylation of the latter, and, when all viral proteins are present (polyprotein), targets STAT2 for degradation. Interacts with serine protease NS3. Post-translationally, specific enzymatic cleavages in vivo yield mature proteins. Cleavages in the lumen of endoplasmic reticulum are performed by host signal peptidase, whereas cleavages in the cytoplasmic side are performed by serine protease NS3. Signal cleavage at the 2K-4B site requires a prior NS3 protease-mediated cleavage at the 4A-2K site. Cleaved in post-Golgi vesicles by a host furin, releasing the mature small envelope protein M, and peptide pr. This cleavage is incomplete as up to 30% of viral particles still carry uncleaved prM. In terms of processing, N-glycosylated. Post-translationally, N-glycosylated. The excreted form is glycosylated and this is required for efficient secretion of the protein from infected cells. Acetylated by host KAT5. Acetylation modulates NS3 RNA-binding and unwinding activities and plays an important positive role for viral replication. In terms of processing, phosphorylated on serines residues. This phosphorylation may trigger NS5 nuclear localization.

It localises to the virion. It is found in the host nucleus. The protein localises to the host cytoplasm. The protein resides in the host perinuclear region. Its subcellular location is the secreted. It localises to the virion membrane. It is found in the host endoplasmic reticulum membrane. The enzyme catalyses Selective hydrolysis of -Xaa-Xaa-|-Yaa- bonds in which each of the Xaa can be either Arg or Lys and Yaa can be either Ser or Ala.. It catalyses the reaction RNA(n) + a ribonucleoside 5'-triphosphate = RNA(n+1) + diphosphate. It carries out the reaction a ribonucleoside 5'-triphosphate + H2O = a ribonucleoside 5'-diphosphate + phosphate + H(+). The catalysed reaction is ATP + H2O = ADP + phosphate + H(+). The enzyme catalyses a 5'-end (5'-triphosphoguanosine)-ribonucleoside in mRNA + S-adenosyl-L-methionine = a 5'-end (N(7)-methyl 5'-triphosphoguanosine)-ribonucleoside in mRNA + S-adenosyl-L-homocysteine. It catalyses the reaction a 5'-end (N(7)-methyl 5'-triphosphoguanosine)-ribonucleoside in mRNA + S-adenosyl-L-methionine = a 5'-end (N(7)-methyl 5'-triphosphoguanosine)-(2'-O-methyl-ribonucleoside) in mRNA + S-adenosyl-L-homocysteine + H(+). Functionally, plays a role in virus budding by binding to the cell membrane and gathering the viral RNA into a nucleocapsid that forms the core of a mature virus particle. During virus entry, may induce genome penetration into the host cytoplasm after hemifusion induced by the surface proteins. Can migrate to the cell nucleus where it modulates host functions. Inhibits RNA silencing by interfering with host Dicer. In terms of biological role, prevents premature fusion activity of envelope proteins in trans-Golgi by binding to envelope protein E at pH6.0. After virion release in extracellular space, gets dissociated from E dimers. Its function is as follows. Acts as a chaperone for envelope protein E during intracellular virion assembly by masking and inactivating envelope protein E fusion peptide. prM is the only viral peptide matured by host furin in the trans-Golgi network probably to avoid catastrophic activation of the viral fusion activity in acidic Golgi compartment prior to virion release. prM-E cleavage is inefficient, and many virions are only partially matured. These uncleaved prM would play a role in immune evasion. Functionally, may play a role in virus budding. Exerts cytotoxic effects by activating a mitochondrial apoptotic pathway through M ectodomain. May display a viroporin activity. Binds to host cell surface receptor and mediates fusion between viral and cellular membranes. Envelope protein is synthesized in the endoplasmic reticulum in the form of heterodimer with protein prM. They play a role in virion budding in the ER, and the newly formed immature particle is covered with 60 spikes composed of heterodimer between precursor prM and envelope protein E. The virion is transported to the Golgi apparatus where the low pH causes dissociation of PrM-E heterodimers and formation of E homodimers. prM-E cleavage is inefficient, and many virions are only partially matured. These uncleaved prM would play a role in immune evasion. In terms of biological role, involved in immune evasion, pathogenesis and viral replication. Once cleaved off the polyprotein, is targeted to three destinations: the viral replication cycle, the plasma membrane and the extracellular compartment. Essential for viral replication. Required for formation of the replication complex and recruitment of other non-structural proteins to the ER-derived membrane structures. Excreted as a hexameric lipoparticle that plays a role against host immune response. Antagonizing the complement function. Binds to the host macrophages and dendritic cells. Inhibits signal transduction originating from Toll-like receptor 3 (TLR3). Its function is as follows. Component of the viral RNA replication complex that functions in virion assembly and antagonizes the host immune response. Functionally, required cofactor for the serine protease function of NS3. May have membrane-destabilizing activity and form viroporins. Displays three enzymatic activities: serine protease, NTPase and RNA helicase. NS3 serine protease, in association with NS2B, performs its autocleavage and cleaves the polyprotein at dibasic sites in the cytoplasm: C-prM, NS2A-NS2B, NS2B-NS3, NS3-NS4A, NS4A-2K and NS4B-NS5. NS3 RNA helicase binds RNA and unwinds dsRNA in the 3' to 5' direction. In terms of biological role, regulates the ATPase activity of the NS3 helicase activity. NS4A allows NS3 helicase to conserve energy during unwinding. Its function is as follows. Functions as a signal peptide for NS4B and is required for the interferon antagonism activity of the latter. Functionally, induces the formation of ER-derived membrane vesicles where the viral replication takes place. Inhibits interferon (IFN)-induced host STAT1 phosphorylation and nuclear translocation, thereby preventing the establishment of cellular antiviral state by blocking the IFN-alpha/beta pathway. Inhibits STAT2 translocation in the nucleus after IFN-alpha treatment. Replicates the viral (+) and (-) RNA genome, and performs the capping of genomes in the cytoplasm. NS5 methylates viral RNA cap at guanine N-7 and ribose 2'-O positions. Besides its role in RNA genome replication, also prevents the establishment of cellular antiviral state by blocking the interferon-alpha/beta (IFN-alpha/beta) signaling pathway. Inhibits host TYK2 and STAT2 phosphorylation, thereby preventing activation of JAK-STAT signaling pathway. This chain is Genome polyprotein, found in Homo sapiens (Human).